Reading from the N-terminus, the 274-residue chain is Dermonecrotic toxin SdSicTox-betaIIB1biii (274 aa).

Residue His-5 is part of the active site. Residues Glu-25 and Asp-27 each coordinate Mg(2+). His-41 serves as the catalytic Nucleophile. Disulfide bonds link Cys-45–Cys-51 and Cys-47–Cys-190. Asp-85 is a binding site for Mg(2+).

This sequence belongs to the arthropod phospholipase D family. Class II subfamily. Mg(2+) is required as a cofactor. In terms of tissue distribution, expressed by the venom gland.

It is found in the secreted. The enzyme catalyses an N-(acyl)-sphingosylphosphocholine = an N-(acyl)-sphingosyl-1,3-cyclic phosphate + choline. It catalyses the reaction an N-(acyl)-sphingosylphosphoethanolamine = an N-(acyl)-sphingosyl-1,3-cyclic phosphate + ethanolamine. It carries out the reaction a 1-acyl-sn-glycero-3-phosphocholine = a 1-acyl-sn-glycero-2,3-cyclic phosphate + choline. The catalysed reaction is a 1-acyl-sn-glycero-3-phosphoethanolamine = a 1-acyl-sn-glycero-2,3-cyclic phosphate + ethanolamine. Its function is as follows. Dermonecrotic toxins cleave the phosphodiester linkage between the phosphate and headgroup of certain phospholipids (sphingolipid and lysolipid substrates), forming an alcohol (often choline) and a cyclic phosphate. This toxin acts on sphingomyelin (SM). It may also act on ceramide phosphoethanolamine (CPE), lysophosphatidylcholine (LPC) and lysophosphatidylethanolamine (LPE), but not on lysophosphatidylserine (LPS), and lysophosphatidylglycerol (LPG). It acts by transphosphatidylation, releasing exclusively cyclic phosphate products as second products. Induces dermonecrosis, hemolysis, increased vascular permeability, edema, inflammatory response, and platelet aggregation. This chain is Dermonecrotic toxin SdSicTox-betaIIB1biii, found in Sicarius cf. damarensis (strain GJB-2008) (Six-eyed sand spider).